A 1140-amino-acid chain; its full sequence is Condensin-2 complex subunit G2 (1140 aa).

One copy of the HEAT repeat lies at 460–493; that stretch reads LLPALKSSLHDSSEKVRVAFVGMLLKIKAARAAK.

As to quaternary structure, component of the condensin-2 complex, which contains the smc2 and smc4 heterodimer, and three non SMC subunits that probably regulate the complex: ncaph2, ncapd3 and ncapg2.

It is found in the nucleus. Its function is as follows. Regulatory subunit of the condensin-2 complex, a complex which establishes mitotic chromosome architecture and is involved in physical rigidity of the chromatid axis. Plays a role in the embryonic development of the head and kidney structures. The protein is Condensin-2 complex subunit G2 of Danio rerio (Zebrafish).